A 67-amino-acid chain; its full sequence is MAKKEVAKKTVTVEQIGSPIRRPAVQRQTLVGLGLNKMHRVRTLEDTPAVRGMIRAVQHLVRVVDEK.

The protein belongs to the universal ribosomal protein uL30 family. As to quaternary structure, part of the 50S ribosomal subunit.

The polypeptide is Large ribosomal subunit protein uL30 (Sinorhizobium medicae (strain WSM419) (Ensifer medicae)).